Reading from the N-terminus, the 333-residue chain is MNIAAKPPLTIRLCGPRGFCAGVDRAIQIVVLALKSYGAPVYVRHEIVHNRYVVEGLEAKGAVFVEELDEIPAEHRAQPVVFSAHGVPKSVPEDAVSRNLFYLDATCPLVSKVHKQAMRHNRLGRHVVLIGHAGHPEVIGTMGQLPEGSVSLIETIEDADAYIPVDADNLGYVTQTTLSVDDTAGVIARLQERFPNLTAPAADSICYATTNRQEVVKQAAPGCDLFIIVGAPNSSNSKRLVEVALRAGAKKSILVQRAAELDWDEIGAISTLGLSAGASAPEVIVNEIIEAFRARFDARVELAETVQETENFLVNRELRSIELTAADMAFVNG.

Cys-20 is a binding site for [4Fe-4S] cluster. Residues His-49 and His-85 each coordinate (2E)-4-hydroxy-3-methylbut-2-enyl diphosphate. Dimethylallyl diphosphate-binding residues include His-49 and His-85. Isopentenyl diphosphate-binding residues include His-49 and His-85. Cys-107 lines the [4Fe-4S] cluster pocket. His-135 contacts (2E)-4-hydroxy-3-methylbut-2-enyl diphosphate. Residue His-135 participates in dimethylallyl diphosphate binding. His-135 is an isopentenyl diphosphate binding site. The active-site Proton donor is Glu-137. Position 176 (Thr-176) interacts with (2E)-4-hydroxy-3-methylbut-2-enyl diphosphate. Position 206 (Cys-206) interacts with [4Fe-4S] cluster. Residues Ser-234, Ser-235, Asn-236, and Ser-279 each contribute to the (2E)-4-hydroxy-3-methylbut-2-enyl diphosphate site. Dimethylallyl diphosphate contacts are provided by Ser-234, Ser-235, Asn-236, and Ser-279. Isopentenyl diphosphate-binding residues include Ser-234, Ser-235, Asn-236, and Ser-279.

This sequence belongs to the IspH family. Requires [4Fe-4S] cluster as cofactor.

It catalyses the reaction isopentenyl diphosphate + 2 oxidized [2Fe-2S]-[ferredoxin] + H2O = (2E)-4-hydroxy-3-methylbut-2-enyl diphosphate + 2 reduced [2Fe-2S]-[ferredoxin] + 2 H(+). The catalysed reaction is dimethylallyl diphosphate + 2 oxidized [2Fe-2S]-[ferredoxin] + H2O = (2E)-4-hydroxy-3-methylbut-2-enyl diphosphate + 2 reduced [2Fe-2S]-[ferredoxin] + 2 H(+). Its pathway is isoprenoid biosynthesis; dimethylallyl diphosphate biosynthesis; dimethylallyl diphosphate from (2E)-4-hydroxy-3-methylbutenyl diphosphate: step 1/1. The protein operates within isoprenoid biosynthesis; isopentenyl diphosphate biosynthesis via DXP pathway; isopentenyl diphosphate from 1-deoxy-D-xylulose 5-phosphate: step 6/6. Functionally, catalyzes the conversion of 1-hydroxy-2-methyl-2-(E)-butenyl 4-diphosphate (HMBPP) into a mixture of isopentenyl diphosphate (IPP) and dimethylallyl diphosphate (DMAPP). Acts in the terminal step of the DOXP/MEP pathway for isoprenoid precursor biosynthesis. The sequence is that of 4-hydroxy-3-methylbut-2-enyl diphosphate reductase from Rhizobium leguminosarum bv. trifolii (strain WSM2304).